The sequence spans 306 residues: Agmatinase (306 aa).

Residues H126, D149, H151, D153, D230, and D232 each coordinate Mn(2+).

It belongs to the arginase family. Agmatinase subfamily. Mn(2+) serves as cofactor.

The enzyme catalyses agmatine + H2O = urea + putrescine. The protein operates within amine and polyamine biosynthesis; putrescine biosynthesis via agmatine pathway; putrescine from agmatine: step 1/1. In terms of biological role, catalyzes the formation of putrescine from agmatine. The polypeptide is Agmatinase (Shigella dysenteriae serotype 1 (strain Sd197)).